We begin with the raw amino-acid sequence, 258 residues long: Peptidase inhibitor 15 (258 aa).

The signal sequence occupies residues 1–21 (MIMNSAVSLVILLSLLCEAHT). The propeptide occupies 22-60 (VVLLNPTDSSLPANNFTDTEAALSTPLESADIPKARRKR). 2 N-linked (GlcNAc...) asparagine glycosylation sites follow: N36 and N124. The 141-residue stretch at 71 to 211 (LDYHNQVRGK…RRAVYLVCNY (141 aa)) folds into the SCP domain.

Belongs to the CRISP family. Post-translationally, N-glycosylated. In terms of tissue distribution, weakly expressed. Expressed at low level in prostate, mammary gland, salivary gland and thyroid gland.

The protein localises to the secreted. Its function is as follows. Serine protease inhibitor which displays weak inhibitory activity against trypsin. May play a role in facial patterning during embryonic development. This Mus musculus (Mouse) protein is Peptidase inhibitor 15 (Pi15).